A 580-amino-acid chain; its full sequence is Cytochrome c oxidase subunit 1 (580 aa).

The tract at residues 1–25 (MTAVAPRVDGHVAPQRPEPTGHARK) is disordered. A helical transmembrane segment spans residues 43 to 63 (IMYIIMSFSFFFLGGLMALLI). His87 serves as a coordination point for Fe(II)-heme a. A run of 6 helical transmembrane segments spans residues 90–110 (VMLL…VLPL), 122–142 (LNAF…AGFL), 171–191 (MWII…INML), 214–234 (IFVT…AALG), 259–279 (LFWF…FGII), and 292–312 (FGYI…MAVW). Residues His265 and Tyr269 each contribute to the Cu cation site. The segment at residues 265–269 (HPEVY) is a cross-link (1'-histidyl-3'-tyrosine (His-Tyr)). Cu cation contacts are provided by His314 and His315. 2 helical membrane-spanning segments follow: residues 316–336 (MFVT…LISV) and 360–380 (MIWA…GIML). Position 398 (His398) interacts with heme a3. Transmembrane regions (helical) follow at residues 399 to 419 (FHYT…YFWF), 434 to 454 (IHFW…HWLG), and 477 to 497 (ISTI…WNVF). His400 provides a ligand contact to Fe(II)-heme a.

Belongs to the heme-copper respiratory oxidase family. In terms of assembly, associates with subunits II, III and IV to form cytochrome c oxidase. It depends on Cu(2+) as a cofactor. Heme is required as a cofactor.

It localises to the cell membrane. The enzyme catalyses 4 Fe(II)-[cytochrome c] + O2 + 8 H(+)(in) = 4 Fe(III)-[cytochrome c] + 2 H2O + 4 H(+)(out). Its pathway is energy metabolism; oxidative phosphorylation. Cytochrome c oxidase is the component of the respiratory chain that catalyzes the reduction of oxygen to water. Subunits 1-3 form the functional core of the enzyme complex. CO I is the catalytic subunit of the enzyme. Electrons originating in cytochrome c are transferred via the copper A center of subunit 2 and heme A of subunit 1 to the bimetallic center formed by heme A3 and copper B. The polypeptide is Cytochrome c oxidase subunit 1 (ctaD) (Corynebacterium efficiens (strain DSM 44549 / YS-314 / AJ 12310 / JCM 11189 / NBRC 100395)).